Consider the following 159-residue polypeptide: Large ribosomal subunit protein uL15 (159 aa).

A compositionally biased stretch (basic and acidic residues) spans 1 to 18 (MKLNEIRDNEGSSKDRIR). Residues 1–37 (MKLNEIRDNEGSSKDRIRVGRGIGSGKGKTGGRGVKG) form a disordered region. Over residues 21–35 (RGIGSGKGKTGGRGV) the composition is skewed to gly residues.

Belongs to the universal ribosomal protein uL15 family. In terms of assembly, part of the 50S ribosomal subunit.

In terms of biological role, binds to the 23S rRNA. The chain is Large ribosomal subunit protein uL15 from Agrobacterium fabrum (strain C58 / ATCC 33970) (Agrobacterium tumefaciens (strain C58)).